The chain runs to 714 residues: FERM domain-containing protein 7 (714 aa).

In terms of domain architecture, FERM spans 2–282; that stretch reads LHLKVQFLDD…EYHAFFRLSE (281 aa). A coiled-coil region spans residues 537 to 558; it reads NIRMKSFQQDLQVLQEAIARTS.

Expressed in liver, kidney, pancreas and at low levels in brain and heart. Expressed in embryonic brain and developing neural retina.

It localises to the cell projection. It is found in the neuron projection. The protein resides in the growth cone. Functionally, plays a role in neurite development, may be through the activation of the GTPase RAC1. Plays a role in the control of eye movement and gaze stability. The chain is FERM domain-containing protein 7 (FRMD7) from Homo sapiens (Human).